Here is a 282-residue protein sequence, read N- to C-terminus: Aldo-keto reductase BQ2027_MB2996 (282 aa).

Tyr57 acts as the Proton donor in catalysis. 9 residues coordinate NADPH: Leu197, Val235, Arg237, Ser238, Ala239, Arg243, Ser246, Asn247, and Arg273.

It belongs to the aldo/keto reductase family.

The chain is Aldo-keto reductase BQ2027_MB2996 from Mycobacterium bovis (strain ATCC BAA-935 / AF2122/97).